The chain runs to 217 residues: MSENNEFDIADLRRDYVRGGLRRRDLTTNPLDLFERWLRQACDARLADPTAMCVATVDKSGQPHQRIVLLKHYDAQGMVFYTNLGSNKAQQLEENPRISLHFPWHMLDRQVSITGTAHRLTALEVMKYFHSRPKDSQIAAWVSHQSARISTRGILESKFLELKQKFLQGEIPLPSFWGGYRVSLETIEFWQGRESRLHDRFLYQRDGDGWQIDRLAP.

Substrate contacts are provided by residues 13-16 and lysine 71; that span reads RRDY. FMN-binding positions include 66-71, 81-82, lysine 88, and glutamine 110; these read RIVLLK and YT. Residues tyrosine 128, arginine 132, and serine 136 each contribute to the substrate site. FMN contacts are provided by residues 145–146 and tryptophan 190; that span reads QS. Residue 196-198 coordinates substrate; that stretch reads RLH. Arginine 200 contacts FMN.

Belongs to the pyridoxamine 5'-phosphate oxidase family. In terms of assembly, homodimer. FMN serves as cofactor.

The enzyme catalyses pyridoxamine 5'-phosphate + O2 + H2O = pyridoxal 5'-phosphate + H2O2 + NH4(+). It catalyses the reaction pyridoxine 5'-phosphate + O2 = pyridoxal 5'-phosphate + H2O2. Its pathway is cofactor metabolism; pyridoxal 5'-phosphate salvage; pyridoxal 5'-phosphate from pyridoxamine 5'-phosphate: step 1/1. The protein operates within cofactor metabolism; pyridoxal 5'-phosphate salvage; pyridoxal 5'-phosphate from pyridoxine 5'-phosphate: step 1/1. Catalyzes the oxidation of either pyridoxine 5'-phosphate (PNP) or pyridoxamine 5'-phosphate (PMP) into pyridoxal 5'-phosphate (PLP). The sequence is that of Pyridoxine/pyridoxamine 5'-phosphate oxidase from Edwardsiella ictaluri (strain 93-146).